The following is a 125-amino-acid chain: Small ribosomal subunit protein bS6 (125 aa).

Residues 99-125 (ASPMVKAKDERRASAEVENNDFEDAEE) are disordered. The span at 104–113 (KAKDERRASA) shows a compositional bias: basic and acidic residues. Residues 116–125 (ENNDFEDAEE) are compositionally biased toward acidic residues.

This sequence belongs to the bacterial ribosomal protein bS6 family.

Its function is as follows. Binds together with bS18 to 16S ribosomal RNA. This Mannheimia succiniciproducens (strain KCTC 0769BP / MBEL55E) protein is Small ribosomal subunit protein bS6.